The chain runs to 188 residues: Elongation factor P (188 aa).

Belongs to the elongation factor P family.

The protein localises to the cytoplasm. Its pathway is protein biosynthesis; polypeptide chain elongation. Functionally, involved in peptide bond synthesis. Stimulates efficient translation and peptide-bond synthesis on native or reconstituted 70S ribosomes in vitro. Probably functions indirectly by altering the affinity of the ribosome for aminoacyl-tRNA, thus increasing their reactivity as acceptors for peptidyl transferase. The polypeptide is Elongation factor P (Rhodopseudomonas palustris (strain ATCC BAA-98 / CGA009)).